A 323-amino-acid chain; its full sequence is Cuticle collagen 39 (323 aa).

The signal sequence occupies residues 1 to 28 (MTGPTCLAVVAGISGVFVFGALFSVAQI). Over residues 80–89 (QCNCGPQASN) the composition is skewed to polar residues. Residues 80–293 (QCNCGPQASN…GAAEQGYRHR (214 aa)) form a disordered region. Triple-helical region stretches follow at residues 93–125 (GPPGPPGAPGDRGLDGQPGGAGNPGQPGVAGPK), 138–200 (GSPG…GGQR), and 203–265 (GLPG…PGAD). Gly residues predominate over residues 108–117 (GQPGGAGNPG). Residues 136-146 (PAGSPGPAGAP) are compositionally biased toward low complexity. Residues 159–168 (GHPGQGGSQG) show a composition bias toward gly residues. A compositionally biased stretch (low complexity) spans 169-191 (PAGPRGPAGDAGAPGQVGAPGNP). Gly residues predominate over residues 224 to 233 (GQSGGQGQQG). Residues 234–267 (PAGPAGPDGQPGQPGQDGQAGAPGNDGAPGADAA) show a composition bias toward low complexity.

This sequence belongs to the cuticular collagen family. As to quaternary structure, collagen polypeptide chains are complexed within the cuticle by disulfide bonds and other types of covalent cross-links.

In terms of biological role, nematode cuticles are composed largely of collagen-like proteins. The cuticle functions both as an exoskeleton and as a barrier to protect the worm from its environment. The chain is Cuticle collagen 39 (col-39) from Caenorhabditis elegans.